A 322-amino-acid polypeptide reads, in one-letter code: Phosphatidylglycerol--prolipoprotein diacylglyceryl transferase (322 aa).

4 consecutive transmembrane segments (helical) span residues 21–41 (PLPIRAYAMCIIAGIIVAIWL), 50–70 (GGNPEVVLDAAIVAVPAGIIG), 98–118 (NGGLGIWGAVILGGLAVWAYF), and 123–143 (IPLAPFADAVAPGVILAQAIG). R144 contacts a 1,2-diacyl-sn-glycero-3-phospho-(1'-sn-glycerol). The next 2 helical transmembrane spans lie at 191–211 (VHPTFLYEMLWNLLIFGLLIW) and 254–274 (INTLVSAVVFILAVIVFLRLG). The disordered stretch occupies residues 283–322 (VDPAYHAAQAERDDTETAGLDATTGTVPGDSPETTGKKRK).

This sequence belongs to the Lgt family.

The protein localises to the cell membrane. It carries out the reaction L-cysteinyl-[prolipoprotein] + a 1,2-diacyl-sn-glycero-3-phospho-(1'-sn-glycerol) = an S-1,2-diacyl-sn-glyceryl-L-cysteinyl-[prolipoprotein] + sn-glycerol 1-phosphate + H(+). Its pathway is protein modification; lipoprotein biosynthesis (diacylglyceryl transfer). In terms of biological role, catalyzes the transfer of the diacylglyceryl group from phosphatidylglycerol to the sulfhydryl group of the N-terminal cysteine of a prolipoprotein, the first step in the formation of mature lipoproteins. The sequence is that of Phosphatidylglycerol--prolipoprotein diacylglyceryl transferase from Corynebacterium efficiens (strain DSM 44549 / YS-314 / AJ 12310 / JCM 11189 / NBRC 100395).